Reading from the N-terminus, the 197-residue chain is HTH-type transcriptional repressor BdcR (197 aa).

The HTH tetR-type domain occupies 15–75; it reads RFAPEQAISA…RVLNEYVGTE (61 aa). A DNA-binding region (H-T-H motif) is located at residues 38-57; it reads SVAEVTDYLGINPPSLYAAF.

Its function is as follows. Negatively regulates expression of bdcA. In Escherichia coli (strain K12), this protein is HTH-type transcriptional repressor BdcR (bdcR).